The following is a 548-amino-acid chain: ETS domain-containing transcription factor ERF (548 aa).

Phosphothreonine is present on residues threonine 3 and threonine 7. Serine 20 and serine 24 each carry phosphoserine. A DNA-binding region (ETS) is located at residues 27 to 107 (IQLWHFILEL…KGKRFTYKFN (81 aa)). Disordered stretches follow at residues 130–169 (QSAP…SSSS), 184–225 (GSVS…LARL), and 280–304 (SPTL…SHFS). A phosphoserine mark is found at serine 185 and serine 190. Positions 289 to 301 (SGGGGPSGSGGGS) are enriched in gly residues. The residue at position 327 (serine 327) is a Phosphoserine. The tract at residues 342 to 478 (PQRPDKCPLP…GEAPGASQCM (137 aa)) is disordered. A compositionally biased stretch (pro residues) spans 348-361 (CPLPPMAPETPPVP). Composition is skewed to low complexity over residues 362-373 (SSASSSSSSSSS) and 394-403 (KAVAGADKSG). 2 positions are modified to phosphoserine: serine 431 and serine 435. The segment covering 431–451 (SEGESEEVEVTDISDEDEEDG) has biased composition (acidic residues). Threonine 441 is modified (phosphothreonine). Serine 444 carries the post-translational modification Phosphoserine. Residues lysine 465, lysine 481, and lysine 512 each participate in a glycyl lysine isopeptide (Lys-Gly) (interchain with G-Cter in SUMO2) cross-link. The disordered stretch occupies residues 492-548 (CRLEGGGGPAGGFEDEGEDKKVRGEGPGEAGGPLTPRRVSSDLQHATAQLSLEHRDS). Threonine 526 is modified (phosphothreonine; by MAPK1). 3 positions are modified to phosphoserine: serine 531, serine 532, and serine 548. The segment covering 532–541 (SDLQHATAQL) has biased composition (polar residues).

The protein belongs to the ETS family. Post-translationally, phosphorylated by multiple kinases including MAPK1/ERK2 at THR-526. Phosphorylation regulates the activity of ERF. As to expression, highest levels in testis, ovary, pancreas, and heart.

The protein localises to the nucleus. Its function is as follows. Potent transcriptional repressor that binds to the H1 element of the Ets2 promoter. May regulate other genes involved in cellular proliferation. Required for extraembryonic ectoderm differentiation, ectoplacental cone cavity closure, and chorioallantoic attachment. May be important for regulating trophoblast stem cell differentiation. In Homo sapiens (Human), this protein is ETS domain-containing transcription factor ERF (ERF).